Consider the following 306-residue polypeptide: Ubiquitin-conjugating enzyme E2Q-like protein CG4502 (306 aa).

The interval 18–77 (HKSSNNNNNNNNNHNNNINNNNNNDKVDGATGSSPNINNNNNNNNNNNNHDGAAAPSSAG) is disordered. Composition is skewed to low complexity over residues 22–41 (NNNN…NNNN) and 53–77 (NINN…SSAG). Positions 138 to 299 (IRTRRLMKEY…VKTHEKYGWV (162 aa)) constitute a UBC core domain. The active-site Glycyl thioester intermediate is the Cys-234.

This sequence belongs to the ubiquitin-conjugating enzyme family.

It carries out the reaction S-ubiquitinyl-[E1 ubiquitin-activating enzyme]-L-cysteine + [E2 ubiquitin-conjugating enzyme]-L-cysteine = [E1 ubiquitin-activating enzyme]-L-cysteine + S-ubiquitinyl-[E2 ubiquitin-conjugating enzyme]-L-cysteine.. It functions in the pathway protein modification; protein ubiquitination. Its function is as follows. Catalyzes the covalent attachment of ubiquitin to other proteins. The polypeptide is Ubiquitin-conjugating enzyme E2Q-like protein CG4502 (Drosophila melanogaster (Fruit fly)).